The primary structure comprises 376 residues: Thymidine kinase (376 aa).

Positions 1–38 (MASYPCHQHASAFDQAARSRGHNNRRTALRPRRQQKAT) are disordered. Basic residues predominate over residues 19-35 (SRGHNNRRTALRPRRQQ). An ATP-binding site is contributed by 56-63 (GPHGMGKT). The active-site Proton acceptor is the Glu83. Substrate contacts are provided by Tyr101 and Gln125. Arg216 contacts ATP. Arg222 is a substrate binding site.

The protein belongs to the herpesviridae thymidine kinase family. Homodimer.

It carries out the reaction thymidine + ATP = dTMP + ADP + H(+). Functionally, catalyzes the transfer of the gamma-phospho group of ATP to thymidine to generate dTMP in the salvage pathway of pyrimidine synthesis. The dTMP serves as a substrate for DNA polymerase during viral DNA replication. Allows the virus to be reactivated and to grow in non-proliferative cells lacking a high concentration of phosphorylated nucleic acid precursors. This is Thymidine kinase from Homo sapiens (Human).